A 180-amino-acid chain; its full sequence is Ribosome-recycling factor (180 aa).

It belongs to the RRF family.

The protein localises to the cytoplasm. In terms of biological role, responsible for the release of ribosomes from messenger RNA at the termination of protein biosynthesis. May increase the efficiency of translation by recycling ribosomes from one round of translation to another. This is Ribosome-recycling factor from Chlamydia abortus (strain DSM 27085 / S26/3) (Chlamydophila abortus).